A 581-amino-acid chain; its full sequence is Spastin (581 aa).

The segment covering Met1–Gly12 has biased composition (basic residues). The disordered stretch occupies residues Met1–Ala39. Residues Met1–Leu48 are required for nuclear localization. Over Met1–Pro54 the chain is Cytoplasmic. Positions Met1–Gln78 are required for interaction with ATL1. Positions Met1 to Leu191 are required for midbody localization. The segment at Met1–Lys265 is required for interaction with RTN1. Residues Pro4–Lys11 carry the Nuclear localization signal motif. Positions Pro20–Ala39 are enriched in pro residues. Residues Leu48–Met85 form a required for interaction with SSNA1 and microtubules region. Residues Leu55–Trp75 constitute an intramembrane region (helical). The Nuclear export signal motif lies at Val57–Leu65. The Cytoplasmic portion of the chain corresponds to Leu76–Val581. The segment at Ser90–Ala111 is disordered. The span at Pro97–Gly106 shows a compositional bias: pro residues. The MIT domain occupies His118 to Leu192. The interval Glu193–Val581 is sufficient for microtubule severing. The segment at Gly195–Lys277 is disordered. Positions His206–Leu225 are enriched in polar residues. Phosphoserine is present on residues Ser210 and Ser233. Positions Ser235–Ile293 are required for interaction with microtubules and microtubule severing. The segment covering His254–Thr271 has biased composition (polar residues). The residue at position 271 (Thr271) is a Phosphothreonine. A Nuclear localization signal motif is present at residues Arg274–Lys277. Residue Gly347–Thr354 coordinates ATP. Ser562 carries the post-translational modification Phosphoserine.

The protein belongs to the AAA ATPase family. Spastin subfamily. Homohexamer. Mostly monomeric, but assembles into hexameric structure for short periods of time. Oligomerization seems to be a prerequisite for catalytic activity. Binding to ATP in a cleft between two adjacent subunits stabilizes the homohexameric form. Binds to microtubules at least in part via the alpha-tubulin and beta-tubulin tails. The hexamer adopts a ring conformation through which microtubules pass prior to being severed. Does not interact strongly with tubulin heterodimers. Interacts (via MIT domain) with CHMP1B; the interaction is direct. Interacts with SSNA1. Interacts with ATL1. Interacts with RTN1. Interacts with ZFYVE27. Interacts with REEP1. Interacts (via MIT domain) with IST1.

Its subcellular location is the membrane. It is found in the endoplasmic reticulum. The protein resides in the midbody. It localises to the cytoplasm. The protein localises to the cytoskeleton. Its subcellular location is the microtubule organizing center. It is found in the centrosome. The protein resides in the perinuclear region. It localises to the nucleus. The protein localises to the spindle. Its subcellular location is the cell projection. It is found in the axon. It catalyses the reaction n ATP + n H2O + a microtubule = n ADP + n phosphate + (n+1) alpha/beta tubulin heterodimers.. Its activity is regulated as follows. Allosteric enzyme with a cooperative mechanism; at least two neighbor subunits influence each other strongly in spastin hexamers. Microtubule binding promotes cooperative interactions among spastin subunits. Functionally, ATP-dependent microtubule severing protein that specifically recognizes and cuts microtubules that are polyglutamylated. Preferentially recognizes and acts on microtubules decorated with short polyglutamate tails: severing activity increases as the number of glutamates per tubulin rises from one to eight, but decreases beyond this glutamylation threshold. Severing activity is not dependent on tubulin acetylation or detyrosination. Microtubule severing promotes reorganization of cellular microtubule arrays and the release of microtubules from the centrosome following nucleation. It is critical for the biogenesis and maintenance of complex microtubule arrays in axons, spindles and cilia. SPAST is involved in abscission step of cytokinesis and nuclear envelope reassembly during anaphase in cooperation with the ESCRT-III complex. Recruited at the midbody, probably by IST1, and participates in membrane fission during abscission together with the ESCRT-III complex. Recruited to the nuclear membrane by IST1 and mediates microtubule severing, promoting nuclear envelope sealing and mitotic spindle disassembly during late anaphase. Required for membrane traffic from the endoplasmic reticulum (ER) to the Golgi and endosome recycling. Recruited by IST1 to endosomes and regulates early endosomal tubulation and recycling by mediating microtubule severing. Probably plays a role in axon growth and the formation of axonal branches. This Rattus norvegicus (Rat) protein is Spastin.